Here is a 697-residue protein sequence, read N- to C-terminus: Elongation factor G (697 aa).

In terms of domain architecture, tr-type G spans 10–285 (EKTRNIGIVA…GVNDYLPSPL (276 aa)). GTP-binding positions include 19–26 (AHIDAGKT), 83–87 (DTPGH), and 137–140 (NKMD).

Belongs to the TRAFAC class translation factor GTPase superfamily. Classic translation factor GTPase family. EF-G/EF-2 subfamily.

It localises to the cytoplasm. Its function is as follows. Catalyzes the GTP-dependent ribosomal translocation step during translation elongation. During this step, the ribosome changes from the pre-translocational (PRE) to the post-translocational (POST) state as the newly formed A-site-bound peptidyl-tRNA and P-site-bound deacylated tRNA move to the P and E sites, respectively. Catalyzes the coordinated movement of the two tRNA molecules, the mRNA and conformational changes in the ribosome. This chain is Elongation factor G, found in Ligilactobacillus salivarius (strain UCC118) (Lactobacillus salivarius).